Here is a 329-residue protein sequence, read N- to C-terminus: uncharacterized protein (329 aa).

Helical transmembrane passes span 29–49, 78–98, 120–140, 164–184, 217–237, 260–280, and 299–319; these read IVLW…AISH, VLVA…CWMG, KKWL…SLLV, WMIG…LIYL, YFFL…LLVI, FFWT…SFIV, and GSSL…LLFI.

It to M.pneumoniae MPN_129.

It localises to the cell membrane. This is an uncharacterized protein from Mycoplasma pneumoniae (strain ATCC 29342 / M129 / Subtype 1) (Mycoplasmoides pneumoniae).